The following is a 486-amino-acid chain: CDT1-like protein b (486 aa).

Disordered stretches follow at residues 273-294 (PEGG…PSRS) and 348-371 (VKDD…ASDD). Positions 281–294 (LRSTNSLARGPSRS) are enriched in polar residues. The span at 348–363 (VKDDISNESGDEKSNY) shows a compositional bias: basic and acidic residues.

It belongs to the Cdt1 family. In terms of tissue distribution, expressed in proliferating (e.g. shoot and root apical meristems, organ primordia, guard cells and stomatal lineage) and endoreplicating cells (e.g. developing trichomes).

The protein resides in the nucleus. In terms of biological role, member of the pre-replication complex. Regulates endoreduplication. Involved in the coordination of cell and plastid division. The sequence is that of CDT1-like protein b (CDT1B) from Arabidopsis thaliana (Mouse-ear cress).